The chain runs to 498 residues: Ribose import ATP-binding protein RbsA (498 aa).

2 consecutive ABC transporter domains span residues 2–237 (LALQ…VGRD) and 247–491 (VTPG…TGQQ). 34–41 (GENGAGKS) serves as a coordination point for ATP.

Belongs to the ABC transporter superfamily. Ribose importer (TC 3.A.1.2.1) family. In terms of assembly, the complex is composed of an ATP-binding protein (RbsA), two transmembrane proteins (RbsC) and a solute-binding protein (RbsB).

Its subcellular location is the cell membrane. The catalysed reaction is D-ribose(out) + ATP + H2O = D-ribose(in) + ADP + phosphate + H(+). Functionally, part of the ABC transporter complex RbsABC involved in ribose import. Responsible for energy coupling to the transport system. The chain is Ribose import ATP-binding protein RbsA from Deinococcus geothermalis (strain DSM 11300 / CIP 105573 / AG-3a).